We begin with the raw amino-acid sequence, 128 residues long: Small ribosomal subunit protein uS9 (128 aa).

Part of the 30S ribosomal subunit. Contacts proteins S7 and S10.

Its function is as follows. Part of the top of the head of the 30S subunit. The C-terminal region penetrates the head emerging in the P-site where it contacts tRNA. This Thermus thermophilus (strain ATCC 27634 / DSM 579 / HB8) protein is Small ribosomal subunit protein uS9 (rpsI).